The chain runs to 822 residues: Cadherin-3 (822 aa).

Positions 1–25 (MELLSGPHAFLLLLLQVCWLRSVVS) are cleaved as a signal peptide. The propeptide occupies 26–99 (EPYRAGFIGE…PTRILRRRKR (74 aa)). Cadherin domains lie at 100 to 207 (EWVM…KPKF), 208 to 320 (TQDT…APEF), 321 to 432 (EPQK…APVF), 433 to 538 (VPPS…DHGP), and 539 to 645 (IPEP…RPWK). Residues 100-647 (EWVMPPIFVP…NDCPRPWKGG (548 aa)) are Extracellular-facing. Asn-192 is a glycosylation site (N-linked (GlcNAc...) asparagine). N-linked (GlcNAc...) asparagine glycosylation is present at Asn-558. A helical membrane pass occupies residues 648 to 670 (FILPILGAVLALLTLLLALLLLV). Residues 671 to 822 (RKKRKVKEPL…ADMYGGGEDD (152 aa)) are Cytoplasmic-facing.

Interacts with CDCP1 and CTNNB1.

It localises to the cell membrane. Its function is as follows. Cadherins are calcium-dependent cell adhesion proteins. They preferentially interact with themselves in a homophilic manner in connecting cells; cadherins may thus contribute to the sorting of heterogeneous cell types. This is Cadherin-3 (Cdh3) from Mus musculus (Mouse).